A 246-amino-acid polypeptide reads, in one-letter code: Acetoacetate decarboxylase (246 aa).

The active-site Schiff-base intermediate with acetoacetate is the Lys116.

The protein belongs to the ADC family.

The catalysed reaction is acetoacetate + H(+) = acetone + CO2. Catalyzes the conversion of acetoacetate to acetone and carbon dioxide. The sequence is that of Acetoacetate decarboxylase from Clostridium botulinum (strain Eklund 17B / Type B).